Reading from the N-terminus, the 103-residue chain is Small ubiquitin-related modifier 3 (103 aa).

Residues Lys-5 and Lys-7 each participate in a glycyl lysine isopeptide (Lys-Gly) (interchain with G-Cter in SUMO2) cross-link. Lys-11 participates in a covalent cross-link: Glycyl lysine isopeptide (Lys-Gly) (interchain with G-Cter in SUMO); alternate. Lys-11 participates in a covalent cross-link: Glycyl lysine isopeptide (Lys-Gly) (interchain with G-Cter in SUMO2); alternate. In terms of domain architecture, Ubiquitin-like spans 15-92; it reads DHINLKVAGQ…IDVFQQQTGG (78 aa). Residue Gly-92 forms a Glycyl lysine isopeptide (Gly-Lys) (interchain with K-? in acceptor proteins) linkage. The propeptide occupies 93–103; it reads VPESSLAGHSF.

The protein belongs to the ubiquitin family. SUMO subfamily. In terms of assembly, covalently attached to a number of proteins. Interacts with BMAL1. Interacts with USP25 (via ts SIM domain); the interaction sumoylates USP25 and inhibits its ubiquitin hydrolyzing activity. Interacts with SAE2 and UBE2I. In terms of processing, polymeric chains can be formed through Lys-11 cross-linking. Cleavage of precursor form by SENP1, SENP2 or SENP5 is necessary for function. Expressed predominantly in liver.

It localises to the cytoplasm. The protein localises to the nucleus. It is found in the PML body. In terms of biological role, ubiquitin-like protein which can be covalently attached to target lysines either as a monomer or as a lysine-linked polymer. Does not seem to be involved in protein degradation and may function as an antagonist of ubiquitin in the degradation process. Plays a role in a number of cellular processes such as nuclear transport, DNA replication and repair, mitosis and signal transduction. Covalent attachment to its substrates requires prior activation by the E1 complex SAE1-SAE2 and linkage to the E2 enzyme UBE2I, and can be promoted by an E3 ligase such as PIAS1-4, RANBP2 or CBX4. Plays a role in the regulation of sumoylation status of SETX. In Homo sapiens (Human), this protein is Small ubiquitin-related modifier 3.